Reading from the N-terminus, the 425-residue chain is MHDIRLIREDPAAFDAAIARRGAESASSRLLALDERRRAIATELQAAQTRRNEASKAIGQAKAQKDEATASALMAEVAALKERMPALEAEGAEVEAALDAALAAIPNLPAADVPDGADEQDNAEQHRWGTPPAFAFEAREHADFAGPLGLDFEAAAAISGARFAVLKGGIARLQRALGAFMLDRQTAAGFTEVIPPLLVRDEAVFGTGQLPKFAEDLFRTTDGRWLIPTAEVSLTNLVREQIVAEAELPMKMTALTPCFRSEAGAAGRDTRGLIRQHQFEKVELVAITTPEQSDAVHEAMTKAAEAILEALGLPYRRVLLCTGDMGFTARKTFDLEVWLPGQGCYREISSVSNCGDFQARRMNARYRPAGESKGTRFVHTLNGSGLAVGRTLVAVLENYQQADGSVTIPEALVPYMGGIAELRPA.

229–231 (TAE) contributes to the L-serine binding site. Residue 260–262 (RSE) coordinates ATP. Glutamate 283 is a binding site for L-serine. 347 to 350 (EISS) contacts ATP. Serine 384 is a binding site for L-serine.

This sequence belongs to the class-II aminoacyl-tRNA synthetase family. Type-1 seryl-tRNA synthetase subfamily. Homodimer. The tRNA molecule binds across the dimer.

The protein localises to the cytoplasm. The catalysed reaction is tRNA(Ser) + L-serine + ATP = L-seryl-tRNA(Ser) + AMP + diphosphate + H(+). It catalyses the reaction tRNA(Sec) + L-serine + ATP = L-seryl-tRNA(Sec) + AMP + diphosphate + H(+). It functions in the pathway aminoacyl-tRNA biosynthesis; selenocysteinyl-tRNA(Sec) biosynthesis; L-seryl-tRNA(Sec) from L-serine and tRNA(Sec): step 1/1. Functionally, catalyzes the attachment of serine to tRNA(Ser). Is also able to aminoacylate tRNA(Sec) with serine, to form the misacylated tRNA L-seryl-tRNA(Sec), which will be further converted into selenocysteinyl-tRNA(Sec). This Rhizorhabdus wittichii (strain DSM 6014 / CCUG 31198 / JCM 15750 / NBRC 105917 / EY 4224 / RW1) (Sphingomonas wittichii) protein is Serine--tRNA ligase.